A 279-amino-acid chain; its full sequence is tRNA (guanine-N(1)-)-methyltransferase (279 aa).

Residues glycine 117 and 141–146 (LGDYVL) contribute to the S-adenosyl-L-methionine site. Residues 256–279 (WTPDGSGFRAGGDPVADSSDTNEP) form a disordered region.

Belongs to the RNA methyltransferase TrmD family. As to quaternary structure, homodimer.

The protein resides in the cytoplasm. It carries out the reaction guanosine(37) in tRNA + S-adenosyl-L-methionine = N(1)-methylguanosine(37) in tRNA + S-adenosyl-L-homocysteine + H(+). In terms of biological role, specifically methylates guanosine-37 in various tRNAs. In Kineococcus radiotolerans (strain ATCC BAA-149 / DSM 14245 / SRS30216), this protein is tRNA (guanine-N(1)-)-methyltransferase.